The chain runs to 376 residues: WW domain-binding protein 4 (376 aa).

Residues 11-42 (KFCDYCKCWIADNRPSVEFHERGKNHKENVAR) form a Matrin-type zinc finger. The segment covering 94-111 (PTVSPVISTVQPTPTSNQ) has biased composition (polar residues). Disordered regions lie at residues 94–127 (PTVS…ASKG) and 192–324 (WEKP…ECLS). The segment covering 114–123 (EKKKKKKKKE) has biased composition (basic residues). 2 WW domains span residues 123-156 (EASK…KPEG) and 164-197 (TAAK…KPED). Basic and acidic residues predominate over residues 219-272 (EDAKSSDSHSDSEGEQKKAGEASTETKKLIIKFKEKNKSTEKRIGPEIQKEKST). Phosphoserine occurs at positions 228 and 230. The segment at 357 to 375 (KKRRLENGKSRNLRQRGDD) is interaction with SNRNP200.

In terms of assembly, component of the spliceosome B complex. Associated with U2 snRNPs. Binds splicing factors SNRPB, SNRPC and SF1. Interacts via the WW domains with the Pro-rich domains of KHDRBS1/SAM68. Interacts via the WW domains with the Pro-rich domains of WBP11. Interacts with SNRNP200.

The protein localises to the nucleus. The protein resides in the nucleus speckle. Functionally, involved in pre-mRNA splicing as a component of the spliceosome. May play a role in cross-intron bridging of U1 and U2 snRNPs in the mammalian A complex. The protein is WW domain-binding protein 4 (Wbp4) of Mus musculus (Mouse).